Reading from the N-terminus, the 172-residue chain is Signal peptidase complex catalytic subunit SEC11 (172 aa).

Over 1 to 14 (MLSSLGNPRQAAAQ) the chain is Cytoplasmic. A helical; Signal-anchor for type II membrane protein membrane pass occupies residues 15–35 (LMNFALILSTAFMMWKGLSVI). Over 36–172 (TDSPSPIVVV…MGLLVVLQRE (137 aa)) the chain is Lumenal. Active-site charge relay system residues include S49 and H90. N111 carries N-linked (GlcNAc...) asparagine glycosylation. D115 (charge relay system) is an active-site residue. The tract at residues 158-169 (VMLGIMGLLVVL) is C-terminal short (CTS) helix.

It belongs to the peptidase S26B family. Component of the signal peptidase complex (SPC) composed of a catalytic subunit SEC11 and three accessory subunits SPC1, SPC2 and SPC3. The complex induces a local thinning of the ER membrane which is used to measure the length of the signal peptide (SP) h-region of protein substrates. This ensures the selectivity of the complex towards h-regions shorter than 18-20 amino acids. SPC associates with the translocon complex.

It localises to the endoplasmic reticulum membrane. The catalysed reaction is Cleavage of hydrophobic, N-terminal signal or leader sequences from secreted and periplasmic proteins.. In terms of biological role, catalytic component of the signal peptidase complex (SPC) which catalyzes the cleavage of N-terminal signal sequences from nascent proteins as they are translocated into the lumen of the endoplasmic reticulum. Specifically cleaves N-terminal signal peptides that contain a hydrophobic alpha-helix (h-region) shorter than 18-20 amino acids. This chain is Signal peptidase complex catalytic subunit SEC11 (SEC11), found in Fusarium vanettenii (strain ATCC MYA-4622 / CBS 123669 / FGSC 9596 / NRRL 45880 / 77-13-4) (Fusarium solani subsp. pisi).